A 211-amino-acid chain; its full sequence is Large ribosomal subunit protein uL3 (211 aa).

Glutamine 150 is subject to N5-methylglutamine.

Belongs to the universal ribosomal protein uL3 family. In terms of assembly, part of the 50S ribosomal subunit. Forms a cluster with proteins L14 and L19. Methylated by PrmB.

Functionally, one of the primary rRNA binding proteins, it binds directly near the 3'-end of the 23S rRNA, where it nucleates assembly of the 50S subunit. The polypeptide is Large ribosomal subunit protein uL3 (Pseudomonas savastanoi pv. phaseolicola (strain 1448A / Race 6) (Pseudomonas syringae pv. phaseolicola (strain 1448A / Race 6))).